Reading from the N-terminus, the 199-residue chain is ATP-dependent Clp protease proteolytic subunit (199 aa).

Residue Ser-103 is the Nucleophile of the active site. His-128 is a catalytic residue.

This sequence belongs to the peptidase S14 family. Fourteen ClpP subunits assemble into 2 heptameric rings which stack back to back to give a disk-like structure with a central cavity, resembling the structure of eukaryotic proteasomes.

It is found in the cytoplasm. The enzyme catalyses Hydrolysis of proteins to small peptides in the presence of ATP and magnesium. alpha-casein is the usual test substrate. In the absence of ATP, only oligopeptides shorter than five residues are hydrolyzed (such as succinyl-Leu-Tyr-|-NHMec, and Leu-Tyr-Leu-|-Tyr-Trp, in which cleavage of the -Tyr-|-Leu- and -Tyr-|-Trp bonds also occurs).. Cleaves peptides in various proteins in a process that requires ATP hydrolysis. Has a chymotrypsin-like activity. Plays a major role in the degradation of misfolded proteins. The protein is ATP-dependent Clp protease proteolytic subunit of Photobacterium profundum (strain SS9).